Consider the following 419-residue polypeptide: Napsin-A (419 aa).

The N-terminal stretch at 1-16 is a signal peptide; that stretch reads MSPLLLLLLCLLLGNL. The Peptidase A1 domain maps to 73-394; sequence YFGTIGLGTP…KNVGPRVGLA (322 aa). The N-linked (GlcNAc...) asparagine glycan is linked to asparagine 85. Residue aspartate 91 is part of the active site. Cysteine 104 and cysteine 111 are joined by a disulfide. Asparagine 128 and asparagine 149 each carry an N-linked (GlcNAc...) asparagine glycan. Cysteine 269 and cysteine 273 are joined by a disulfide. Aspartate 278 is a catalytic residue. An intrachain disulfide couples cysteine 312 to cysteine 349. A glycan (N-linked (GlcNAc...) asparagine) is linked at asparagine 331. Residues 391 to 419 form a disordered region; that stretch reads VGLARAQSRSTDRAERRTTQAQFFKRRPG.

Belongs to the peptidase A1 family. In terms of tissue distribution, expressed at the highest levels in the kidney, at a moderate level in the lung, and at low levels in the spleen and adipose tissue.

Its subcellular location is the secreted. May be involved in processing of pneumocyte surfactant precursors. The chain is Napsin-A (Napsa) from Mus musculus (Mouse).